Consider the following 60-residue polypeptide: MIYQVVLLLLVSPAPVSAAGCNPDCTGIQCGWPRCPGGQNPVMDKCVSCCPFCPPKSAQG.

The N-terminal stretch at 1–19 is a signal peptide; it reads MIYQVVLLLLVSPAPVSAA.

Contains 4 disulfide bonds. Expressed by the venom gland.

It localises to the secreted. Insect-specific toxin. Blocks voltage-gated potassium and sodium channels. This is Insect toxin mu-NPTX-Nc1a from Trichonephila clavata (Joro spider).